Consider the following 128-residue polypeptide: Holo-[acyl-carrier-protein] synthase (128 aa).

Mg(2+)-binding residues include Asp9 and Glu56.

The protein belongs to the P-Pant transferase superfamily. AcpS family. The cofactor is Mg(2+).

It is found in the cytoplasm. It catalyses the reaction apo-[ACP] + CoA = holo-[ACP] + adenosine 3',5'-bisphosphate + H(+). Functionally, transfers the 4'-phosphopantetheine moiety from coenzyme A to a Ser of acyl-carrier-protein. This is Holo-[acyl-carrier-protein] synthase from Pelagibacter ubique (strain HTCC1062).